A 170-amino-acid polypeptide reads, in one-letter code: RNA pyrophosphohydrolase (170 aa).

Positions 6-149 (GFRPNVGIVI…KRDVYRRALK (144 aa)) constitute a Nudix hydrolase domain. The Nudix box signature appears at 38 to 59 (GGIDDGETPEQAMYRELYEEVG).

It belongs to the Nudix hydrolase family. RppH subfamily. A divalent metal cation is required as a cofactor.

In terms of biological role, accelerates the degradation of transcripts by removing pyrophosphate from the 5'-end of triphosphorylated RNA, leading to a more labile monophosphorylated state that can stimulate subsequent ribonuclease cleavage. The protein is RNA pyrophosphohydrolase of Aliivibrio salmonicida (strain LFI1238) (Vibrio salmonicida (strain LFI1238)).